Here is a 221-residue protein sequence, read N- to C-terminus: Germin-like protein 5-1 (221 aa).

Positions Met1–Ala25 are cleaved as a signal peptide. Cys35 and Cys50 are joined by a disulfide. Residues Lys62 to Glu210 enclose the Cupin type-1 domain. A glycan (N-linked (GlcNAc...) asparagine) is linked at Asn71. Residues His110, His112, Glu117, and His156 each contribute to the Mn(2+) site.

This sequence belongs to the germin family. As to quaternary structure, oligomer (believed to be a pentamer but probably hexamer).

Its subcellular location is the secreted. It is found in the extracellular space. The protein resides in the apoplast. Its function is as follows. May play a role in plant defense. Probably has no oxalate oxidase activity even if the active site is conserved. This is Germin-like protein 5-1 from Oryza sativa subsp. japonica (Rice).